The following is a 507-amino-acid chain: NADH-quinone oxidoreductase subunit N (507 aa).

15 consecutive transmembrane segments (helical) span residues 17 to 37 (LVTLSPLILLAAAAVVVMLTA), 46 to 66 (VMILTLAGLVLSFMALFLSQG), 81 to 101 (YALFFIGLIVVATFVVAILCY), 113 to 133 (ALYILLLLAALGGGVLVASSH), 134 to 154 (FASFLLGLELLSISLFALIAY), 168 to 188 (YLILAGFSSGLLLFGMALVYA), 190 to 210 (LGTMQFVKIGTMLAAPGAALE), 211 to 231 (LYGLAGLALIVTGVGFKLALV), 245 to 265 (PVPITAFIATASKGAMLVLLL), 279 to 299 (ITFALSLIAVATILVGNLLAL), 307 to 327 (ILAYSSIAQLGYLLVGFLAFD), 334 to 354 (VAYFLTAYFVTMLGAFGVVTV), 392 to 412 (AGVFTAMLLSLAGIPLTMGFI), 425 to 445 (SLWMPVITLVIGSIIGLFYYM), and 478 to 498 (LAALALLLIWLGIFPAQLIGV).

This sequence belongs to the complex I subunit 2 family. NDH-1 is composed of 14 different subunits. Subunits NuoA, H, J, K, L, M, N constitute the membrane sector of the complex.

Its subcellular location is the cell inner membrane. The catalysed reaction is a quinone + NADH + 5 H(+)(in) = a quinol + NAD(+) + 4 H(+)(out). In terms of biological role, NDH-1 shuttles electrons from NADH, via FMN and iron-sulfur (Fe-S) centers, to quinones in the respiratory chain. The immediate electron acceptor for the enzyme in this species is believed to be ubiquinone. Couples the redox reaction to proton translocation (for every two electrons transferred, four hydrogen ions are translocated across the cytoplasmic membrane), and thus conserves the redox energy in a proton gradient. In Nitrosospira multiformis (strain ATCC 25196 / NCIMB 11849 / C 71), this protein is NADH-quinone oxidoreductase subunit N.